Here is a 633-residue protein sequence, read N- to C-terminus: tRNA uridine 5-carboxymethylaminomethyl modification enzyme MnmG (633 aa).

FAD is bound at residue 13-18 (GGGHAG). 273–287 (GPRYCPSIEDKINRF) serves as a coordination point for NAD(+).

It belongs to the MnmG family. As to quaternary structure, homodimer. Heterotetramer of two MnmE and two MnmG subunits. FAD serves as cofactor.

The protein resides in the cytoplasm. In terms of biological role, NAD-binding protein involved in the addition of a carboxymethylaminomethyl (cmnm) group at the wobble position (U34) of certain tRNAs, forming tRNA-cmnm(5)s(2)U34. In Pseudoalteromonas atlantica (strain T6c / ATCC BAA-1087), this protein is tRNA uridine 5-carboxymethylaminomethyl modification enzyme MnmG.